A 399-amino-acid chain; its full sequence is Argininosuccinate synthase (399 aa).

8 to 16 contacts ATP; that stretch reads AYSGGLDTS. Y87 contributes to the L-citrulline binding site. G117 lines the ATP pocket. 3 residues coordinate L-aspartate: T119, N123, and D124. N123 lines the L-citrulline pocket. Residues R127, S175, E260, and Y272 each coordinate L-citrulline.

This sequence belongs to the argininosuccinate synthase family. Type 1 subfamily. In terms of assembly, homotetramer.

Its subcellular location is the cytoplasm. The catalysed reaction is L-citrulline + L-aspartate + ATP = 2-(N(omega)-L-arginino)succinate + AMP + diphosphate + H(+). It participates in amino-acid biosynthesis; L-arginine biosynthesis; L-arginine from L-ornithine and carbamoyl phosphate: step 2/3. This is Argininosuccinate synthase from Rhodococcus erythropolis (strain PR4 / NBRC 100887).